Here is a 179-residue protein sequence, read N- to C-terminus: Ubiquitin-conjugating enzyme E2 C (179 aa).

Residues 1 to 31 (MASQNRDPAATSVAAARKGAEPSGGAARGPV) form a disordered region. Alanine 2 bears the N-acetylalanine mark. Phosphoserine is present on serine 3. A UBC core domain is found at 30–175 (PVGKRLQQEL…LQETYSKQVT (146 aa)). The active-site Glycyl thioester intermediate is the cysteine 114.

The protein belongs to the ubiquitin-conjugating enzyme family. Component of the APC/C complex, composed of at least 14 distinct subunits that assemble into a complex of at least 19 chains with a combined molecular mass of around 1.2 MDa. Within this complex, directly interacts with ANAPC2. In terms of processing, autoubiquitinated by the APC/C complex, leading to its degradation by the proteasome. Its degradation plays a central role in APC/C regulation, allowing cyclin-A accumulation before S phase entry. APC/C substrates inhibit the autoubiquitination of UBE2C/UBCH10 but not its E2 function, hence APC/C remaining active until its substrates have been destroyed.

The catalysed reaction is S-ubiquitinyl-[E1 ubiquitin-activating enzyme]-L-cysteine + [E2 ubiquitin-conjugating enzyme]-L-cysteine = [E1 ubiquitin-activating enzyme]-L-cysteine + S-ubiquitinyl-[E2 ubiquitin-conjugating enzyme]-L-cysteine.. It catalyses the reaction S-ubiquitinyl-[E1 ubiquitin-activating enzyme]-L-cysteine + [acceptor protein]-L-lysine = [E1 ubiquitin-activating enzyme]-L-cysteine + N(6)-monoubiquitinyl-[acceptor protein]-L-lysine.. It functions in the pathway protein modification; protein ubiquitination. Its function is as follows. Accepts ubiquitin from the E1 complex and catalyzes its covalent attachment to other proteins. In vitro catalyzes 'Lys-11'- and 'Lys-48'-linked polyubiquitination. Acts as an essential factor of the anaphase promoting complex/cyclosome (APC/C), a cell cycle-regulated ubiquitin ligase that controls progression through mitosis. Acts by initiating 'Lys-11'-linked polyubiquitin chains on APC/C substrates, leading to the degradation of APC/C substrates by the proteasome and promoting mitotic exit. This Homo sapiens (Human) protein is Ubiquitin-conjugating enzyme E2 C (UBE2C).